We begin with the raw amino-acid sequence, 136 residues long: Orexigenic neuropeptide QRFP (136 aa).

Positions Met1–Cys18 are cleaved as a signal peptide. Positions Phe19–Arg90 are excised as a propeptide. Residue Gln91 is modified to Pyrrolidone carboxylic acid. A Phenylalanine amide modification is found at Phe133.

This sequence belongs to the RFamide neuropeptide family. In terms of assembly, ligand for the G-protein coupled receptor QRFPR/GPR103. As to expression, expressed widely in the brain with highest expression levels in the cerebellum, medulla, pituitary, retina, vestibular nucleus, and white matter. Also expressed in the bladder, colon, coronary artery, parathyroid gland, prostate, testis, and thyroid.

The protein localises to the secreted. Stimulates feeding behavior, metabolic rate and locomotor activity and increases blood pressure. May have orexigenic activity. May promote aldosterone secretion by the adrenal gland. The sequence is that of Orexigenic neuropeptide QRFP from Homo sapiens (Human).